The primary structure comprises 384 residues: D-galactosamine-6-phosphate deaminase AgaS (384 aa).

2 consecutive SIS domains span residues 45–197 (LEPL…SQTF) and 215–364 (SEGV…PDTP).

It belongs to the SIS family. AgaS subfamily.

The enzyme catalyses D-galactosamine 6-phosphate + H2O = D-tagatopyranose 1-phosphate + NH4(+). Its function is as follows. Catalyzes the isomerization-deamination of galactosamine 6-phosphate to form tagatofuranose 6-phosphate and ammonium ion. This Escherichia coli protein is D-galactosamine-6-phosphate deaminase AgaS.